A 321-amino-acid polypeptide reads, in one-letter code: Annexin A5 (321 aa).

Annexin repeat units follow at residues phenylalanine 15–arginine 86, proline 87–glutamine 158, alanine 170–lysine 242, and serine 246–glycine 317.

Belongs to the annexin family.

In terms of biological role, collagen-binding protein. The sequence is that of Annexin A5 (ANXA5) from Gallus gallus (Chicken).